The primary structure comprises 523 residues: MGSSKSKPKDPSQRRRSLEPPDSTHHGGFPASQTPNKTAAPDTHRTPSRSFGTVATELKLFGDFNTSDTVTSPQRAGALAGSVTTFGTRESRIETDLSFKKRERLQIVNNTEGTWWLAHSLTTGQTGYIPSNYVAPSDSIQAEEWYFGKITRRESGRLLLNPENPRGTFLVRESETTKGAYCLSVSDFDNAKGLNVKHYKIRKLDSGGFYITSRTQFSSLQQLVAYYSKHADGLCHRLTNVCPTSKPQTQGLAKDAWEIPRESLRLEVKLGQGYFGEVWMGTWNGTTRVAIKTLKPGTMSPEAFLQEAQVMKKLRHEKLVQLYAMVSEEPIYIVIEYMSKGSLLDFLKGEMGKYLRLPQLVEMAAQIASGMAYVERMNYVHRDLRAANILVGENLVCKVADFGLARLIEDNEYTARPGARFPVKWTAPEAALYGRFTIKSDVWSFGILLTELTTKGRVPYPGMVNGEVLDRVERGYRMPCPPECPESLHDLMCQCWRKDPEERPTFEYLQAQLLPACVLKIAE.

A disordered region spans residues 1-50; that stretch reads MGSSKSKPKDPSQRRRSLEPPDSTHHGGFPASQTPNKTAAPDTHRTPSRS. Gly2 carries N-myristoyl glycine; by host lipidation. The span at 7-25 shows a compositional bias: basic and acidic residues; it reads KPKDPSQRRRSLEPPDSTH. One can recognise an SH3 domain in the interval 71–139; sequence TSPQRAGALA…PSNYVAPSDS (69 aa). The region spanning 145–242 is the SH2 domain; the sequence is WYFGKITRRE…GLCHRLTNVC (98 aa). The Protein kinase domain occupies 264 to 514; sequence LRLEVKLGQG…TFEYLQAQLL (251 aa). ATP-binding positions include 270-278 and Lys292; that span reads LGQGYFGEV. The Proton acceptor role is filled by Asp383. Phosphotyrosine; by autocatalysis is present on Tyr413.

The protein belongs to the protein kinase superfamily. Tyr protein kinase family. SRC subfamily. Homodimer. The phosphorylated form is termed pp60v-src.

The catalysed reaction is L-tyrosyl-[protein] + ATP = O-phospho-L-tyrosyl-[protein] + ADP + H(+). Its function is as follows. This phosphoprotein, required for both the initiation and the maintenance of neoplastic transformation, is a protein kinase that catalyzes the phosphorylation of tyrosine residues in vitro. This is Tyrosine-protein kinase transforming protein Src (V-SRC) from Gallus gallus (Chicken).